Reading from the N-terminus, the 367-residue chain is Membrane-bound lytic murein transglycosylase C (367 aa).

The signal sequence occupies residues 1–19 (MRKYAKYLPFCLVVPFLAA). Cys-20 carries the N-palmitoyl cysteine lipid modification. Residue Cys-20 is the site of S-diacylglycerol cysteine attachment.

This sequence belongs to the transglycosylase Slt family.

It is found in the cell outer membrane. It carries out the reaction Exolytic cleavage of the (1-&gt;4)-beta-glycosidic linkage between N-acetylmuramic acid (MurNAc) and N-acetylglucosamine (GlcNAc) residues in peptidoglycan, from either the reducing or the non-reducing ends of the peptidoglycan chains, with concomitant formation of a 1,6-anhydrobond in the MurNAc residue.. Murein-degrading enzyme. May play a role in recycling of muropeptides during cell elongation and/or cell division. In Haemophilus ducreyi (strain 35000HP / ATCC 700724), this protein is Membrane-bound lytic murein transglycosylase C.